We begin with the raw amino-acid sequence, 674 residues long: tRNA 5-methylaminomethyl-2-thiouridine biosynthesis bifunctional protein MnmC (674 aa).

The tRNA (mnm(5)s(2)U34)-methyltransferase stretch occupies residues 1–248 (MAASSLPSHN…KREMCFGRYA (248 aa)). An FAD-dependent cmnm(5)s(2)U34 oxidoreductase region spans residues 276-674 (IGAGLAGATV…AIRHWRSGKR (399 aa)).

The protein in the N-terminal section; belongs to the methyltransferase superfamily. tRNA (mnm(5)s(2)U34)-methyltransferase family. It in the C-terminal section; belongs to the DAO family. The cofactor is FAD.

It localises to the cytoplasm. The enzyme catalyses 5-aminomethyl-2-thiouridine(34) in tRNA + S-adenosyl-L-methionine = 5-methylaminomethyl-2-thiouridine(34) in tRNA + S-adenosyl-L-homocysteine + H(+). In terms of biological role, catalyzes the last two steps in the biosynthesis of 5-methylaminomethyl-2-thiouridine (mnm(5)s(2)U) at the wobble position (U34) in tRNA. Catalyzes the FAD-dependent demodification of cmnm(5)s(2)U34 to nm(5)s(2)U34, followed by the transfer of a methyl group from S-adenosyl-L-methionine to nm(5)s(2)U34, to form mnm(5)s(2)U34. The chain is tRNA 5-methylaminomethyl-2-thiouridine biosynthesis bifunctional protein MnmC from Hydrogenovibrio crunogenus (strain DSM 25203 / XCL-2) (Thiomicrospira crunogena).